A 393-amino-acid chain; its full sequence is Dual specificity mitogen-activated protein kinase kinase 1 (393 aa).

The interval 1–27 (MPKKKPTPIQLNPAPDGSAVNGTSSAE) is disordered. A Protein kinase domain is found at 68-361 (FEKISELGAG…LKQLMVHAFI (294 aa)). ATP is bound by residues 74-82 (LGAGNGGVV), K97, 143-146 (MEHM), and 150-153 (SLDQ). K97 is a U0126 binding site. 144 to 146 (EHM) contributes to the K-252a binding site. D190 functions as the Proton acceptor in the catalytic mechanism. ATP is bound by residues 192 to 195 (KPSN) and D208. Residue S194 coordinates K-252a. 208–211 (DFGV) lines the U0126 pocket. Residues S218 and S222 each carry the phosphoserine; by BRAF and RAF1 modification. The interval 270–307 (ELELMFGCQVEGDAAETPPRPRTPGRPLSSYGMDSRPP) is RAF1-binding. T286 carries the post-translational modification Phosphothreonine. A Phosphothreonine; by MAPK1 modification is found at T292. S298 is modified (phosphoserine; by PAK).

This sequence belongs to the protein kinase superfamily. STE Ser/Thr protein kinase family. MAP kinase kinase subfamily. In terms of assembly, found in a complex with at least BRAF, HRAS, MAP2K1, MAPK3/ERK1 and RGS14. Forms a heterodimer with MAP2K2/MEK2. Forms heterodimers with KSR2 which further dimerize to form tetramers. Interacts with KSR1 or KSR2 and BRAF; the interaction with KSR1 or KSR2 mediates KSR1-BRAF or KSR2-BRAF dimerization. Interacts with ARBB2, LAMTOR3 and RAF1. Interacts with MAPK1/ERK2. Interacts with MORG1. Interacts with PPARG. Interacts with isoform 1 of VRK2. Interacts with SGK1. Interacts with BIRC6/bruce. Interacts with KAT7; the interaction promotes KAT7 phosphorylation. Interacts with RAF1 and NEK10; the interaction is required for ERK1/2-signaling pathway activation in response to UV irradiation. Interacts with TRAF3IP3. Interacts with MOS. As to quaternary structure, (Microbial infection) Interacts with Yersinia YopJ. Post-translationally, phosphorylation at Ser-218 and Ser-222 by MAP kinase kinase kinases (BRAF or MEKK1) positively regulates kinase activity. Also phosphorylated at Thr-292 by MAPK1/ERK2 and at Ser-298 by PAK. MAPK1/ERK2 phosphorylation of Thr-292 occurs in response to cellular adhesion and leads to inhibition of Ser-298 phosphorylation by PAK. Autophosphorylated at Ser-218 and Ser-222, autophosphosphorylation is promoted by NEK10 following UV irradiation. In terms of processing, (Microbial infection) Acetylation by Yersinia YopJ prevents phosphorylation and activation, thus blocking the MAPK signaling pathway. In terms of tissue distribution, widely expressed, with extremely low levels in brain.

Its subcellular location is the cytoplasm. The protein resides in the cytoskeleton. It localises to the microtubule organizing center. It is found in the centrosome. The protein localises to the spindle pole body. Its subcellular location is the nucleus. The protein resides in the membrane. The catalysed reaction is L-seryl-[protein] + ATP = O-phospho-L-seryl-[protein] + ADP + H(+). It carries out the reaction L-threonyl-[protein] + ATP = O-phospho-L-threonyl-[protein] + ADP + H(+). It catalyses the reaction L-tyrosyl-[protein] + ATP = O-phospho-L-tyrosyl-[protein] + ADP + H(+). With respect to regulation, ras proteins such as HRAS mediate the activation of RAF proteins such as RAF1 or BRAF which in turn activate extracellular signal-regulated kinases (ERK) through MAPK (mitogen-activated protein kinases) and ERK kinases MAP2K1/MEK1 and MAP2K2/MEK2. Activation occurs through phosphorylation of Ser-218 and Ser-222. MAP2K1/MEK1 binds KSR1 or KSR2 releasing the inhibitory intramolecular interaction between KSR1 or KSR2 protein kinase and N-terminal domains. This allows KSR1 or KSR2 dimerization with BRAF leading to BRAF activation and phosphorylation of MAP2K1. MAP2K1/MEK1 is also the target of negative feed-back regulation by its substrate kinases, such as MAPK1/ERK2. These phosphorylate MAP2K1/MEK1 on Thr-292, thereby facilitating dephosphorylation of the activating residues Ser-218 and Ser-222. Inhibited by serine/threonine phosphatase 2A. Many inhibitors have been identified including pyrrole derivatives, TAK-733 (one of a series of 8-methylpyrido[2,3-d]pyrimidine-4,7(3H,8H)-dione derivatives), CH4987655 and RDEA119/BAY 869766. In terms of biological role, dual specificity protein kinase which acts as an essential component of the MAP kinase signal transduction pathway. Binding of extracellular ligands such as growth factors, cytokines and hormones to their cell-surface receptors activates RAS and this initiates RAF1 activation. RAF1 then further activates the dual-specificity protein kinases MAP2K1/MEK1 and MAP2K2/MEK2. Both MAP2K1/MEK1 and MAP2K2/MEK2 function specifically in the MAPK/ERK cascade, and catalyze the concomitant phosphorylation of a threonine and a tyrosine residue in a Thr-Glu-Tyr sequence located in the extracellular signal-regulated kinases MAPK3/ERK1 and MAPK1/ERK2, leading to their activation and further transduction of the signal within the MAPK/ERK cascade. Activates BRAF in a KSR1 or KSR2-dependent manner; by binding to KSR1 or KSR2 releases the inhibitory intramolecular interaction between KSR1 or KSR2 protein kinase and N-terminal domains which promotes KSR1 or KSR2-BRAF dimerization and BRAF activation. Depending on the cellular context, this pathway mediates diverse biological functions such as cell growth, adhesion, survival and differentiation, predominantly through the regulation of transcription, metabolism and cytoskeletal rearrangements. One target of the MAPK/ERK cascade is peroxisome proliferator-activated receptor gamma (PPARG), a nuclear receptor that promotes differentiation and apoptosis. MAP2K1/MEK1 has been shown to export PPARG from the nucleus. The MAPK/ERK cascade is also involved in the regulation of endosomal dynamics, including lysosome processing and endosome cycling through the perinuclear recycling compartment (PNRC), as well as in the fragmentation of the Golgi apparatus during mitosis. This Homo sapiens (Human) protein is Dual specificity mitogen-activated protein kinase kinase 1.